The chain runs to 369 residues: Secondary metabolism regulator laeA (369 aa).

Residues 1–37 (MFGNGQTGQRLPAMASPPHDSYYSQSLASSRSRNNSD) form a disordered region. The segment covering 20–37 (DSYYSQSLASSRSRNNSD) has biased composition (low complexity).

This sequence belongs to the methyltransferase superfamily. LaeA methyltransferase family. Component of the heterotrimeric velvet complex composed of laeA, veA and velB; VeA acting as a bridging protein between laeA and velB. Interacts directly with veA.

Its subcellular location is the nucleus. The enzyme catalyses L-methionyl-[protein] + S-adenosyl-L-methionine = S-methyl-L-methionyl-[protein] + S-adenosyl-L-homocysteine. In terms of biological role, methyltransferase that performs automethylation. No other methyl-accepting substrate has been identified yet. Component of the velvet transcription factor complex that acts as a global regulator for secondary metabolite gene expression. Required for aflR expression and subsequent aflatoxin production. Negatively regulates veA expression. Controls conidiophore and conidial development. Required for hydrophobin production which plays a role in cell surface hydrophobicity and host defense escape. The polypeptide is Secondary metabolism regulator laeA (Aspergillus flavus (strain ATCC 200026 / FGSC A1120 / IAM 13836 / NRRL 3357 / JCM 12722 / SRRC 167)).